A 296-amino-acid polypeptide reads, in one-letter code: D-alanine--D-alanine ligase (296 aa).

An ATP-grasp domain is found at 103-293 (KEILMHHRMP…FDSFVKRIIE (191 aa)). Residue 129-180 (ISFPVAVKPSSGGSSIATFKVKSIQELKHAYEEASKYGEVMIEQWVTGKEIT) coordinates ATP. Mg(2+) is bound by residues D247, E260, and N262.

It belongs to the D-alanine--D-alanine ligase family. Mg(2+) is required as a cofactor. Requires Mn(2+) as cofactor.

It localises to the cytoplasm. The catalysed reaction is 2 D-alanine + ATP = D-alanyl-D-alanine + ADP + phosphate + H(+). Its pathway is cell wall biogenesis; peptidoglycan biosynthesis. Its function is as follows. Cell wall formation. In Francisella tularensis subsp. novicida (strain U112), this protein is D-alanine--D-alanine ligase.